Consider the following 161-residue polypeptide: Allophycocyanin subunit alpha 1 (161 aa).

An N4-methylasparagine modification is found at Asn-71. Residue Cys-81 participates in (2R,3E)-phycocyanobilin binding.

The protein belongs to the phycobiliprotein family. In terms of assembly, heterohexamer of two alpha chains, one alpha-B chain and three beta chains. Post-translationally, contains one covalently linked phycocyanobilin chromophore. The chromophore is added by phycocyanobilin lyase CpcS 1.

The protein resides in the cellular thylakoid membrane. Its function is as follows. Light-harvesting photosynthetic bile pigment-protein from the phycobiliprotein complex. Allophycocyanin has a maximum absorption at approximately 650 to 653 nanometers. The chain is Allophycocyanin subunit alpha 1 (apcA1) from Nostoc sp. (strain PCC 7120 / SAG 25.82 / UTEX 2576).